A 212-amino-acid chain; its full sequence is Pyridoxine/pyridoxamine 5'-phosphate oxidase (212 aa).

Substrate is bound by residues 8 to 11 (RREY) and K66. FMN-binding positions include 61-66 (RIVLLK), 76-77 (FT), R82, K83, and Q105. Positions 123, 127, and 131 each coordinate substrate. FMN is bound by residues 140-141 (QS) and W185. 191–193 (RLH) serves as a coordination point for substrate. An FMN-binding site is contributed by R195.

This sequence belongs to the pyridoxamine 5'-phosphate oxidase family. Homodimer. The cofactor is FMN.

The enzyme catalyses pyridoxamine 5'-phosphate + O2 + H2O = pyridoxal 5'-phosphate + H2O2 + NH4(+). It catalyses the reaction pyridoxine 5'-phosphate + O2 = pyridoxal 5'-phosphate + H2O2. The protein operates within cofactor metabolism; pyridoxal 5'-phosphate salvage; pyridoxal 5'-phosphate from pyridoxamine 5'-phosphate: step 1/1. Its pathway is cofactor metabolism; pyridoxal 5'-phosphate salvage; pyridoxal 5'-phosphate from pyridoxine 5'-phosphate: step 1/1. In terms of biological role, catalyzes the oxidation of either pyridoxine 5'-phosphate (PNP) or pyridoxamine 5'-phosphate (PMP) into pyridoxal 5'-phosphate (PLP). In Shewanella pealeana (strain ATCC 700345 / ANG-SQ1), this protein is Pyridoxine/pyridoxamine 5'-phosphate oxidase.